Consider the following 1001-residue polypeptide: MGIGTKILSKIEKNKTSDGLTIPLTPTTQKQSSSWCSFESIKTFFRTVIRDWIFLALLGFIMASLSFGMDYAILNLQNGQMRLFDLVKEYHFTLAYLVWVGYVVGLILLSAVCAHYIAPQAIGSGIPEMKTILRGVILKEYLSVRTLLSKMIGLTLSLGSGLPMGKEGPFVHVASVVASQLTRLVHGSSGGIFENESRSGEMLAAGCAVGVACTFSAPIGGVLFSIEVTSVYFAVRNYWRGFFAATCSATLFRILRMFSVSAAVTVEAHYQTNFPPQNVFLPQELPIFALIGLVCGLAGSIFVYLHRRTVLFLRRNWLAKMIFQKYWLIYPIFIATFISSLSFPLGLGKFMGGEERFSHTMKEFFVDCAWTAPPNDSYACPMPTSNATSSDSFDIRHWKGDNYDYSPFVTLSSFQVVYFFLAILASTLPVPSGIFMPVFVLGAAFGRLVGEGVFSLDPYGHISGDIQFFVRPGVYAVVGAAAFCGAVTHTVSVAVIVFELTGQLCHLLPVMIAVLIANAVASYLQPSIYDSIIRIKNLPYLPDIPHTTSLYHQMLIEQFMISPLVYIAKDSTVGDIKRALETKTRIRAFPLVENMESLALVGSVSRSQLQRYVDSQIGTKARFAEATRRIKQRLEDEESERKRREESKSDDTEDSLETTGAGERRASRFLIVPVAKNGPQVAKNETLTGLSEENARKILTVEEKQALFDAASLATPKREMSGKTINPVHIESHHTIGDIFRSITHLSFGRQNFPKKNNHNEFDLFGEERTEWEDMMLNQKLDLSQLDIDSTPFQLSEYTSLFKAHSLFSLLGLNRAYVTKKGQLIGVVALKELRLAIEYLQSGKVPTPGMSIFNEPPTEQSIYEKSARLESGRATGDAQNAAFVTDNGEDDAQNDYIQPPLEVVRRGALTPNRMSELTRLENVRTTPESPHFEVSSPSTSSSCVSIDFSPLDAANSENGSVGGLVLNVPSLPTRARSANELTRQNTHVQINLPDDVHDEKF.

Topologically, residues 1–48 are cytoplasmic; it reads MGIGTKILSKIEKNKTSDGLTIPLTPTTQKQSSSWCSFESIKTFFRTV. The next 2 membrane-spanning stretches (helical) occupy residues 49–85 and 91–117; these read IRDW…RLFD and HFTL…AHYI. The short motif at 123–127 is the Selectivity filter part_1 element; the sequence is GSGIP. Position 124 (S124) interacts with chloride. The helical intramembrane region spans 126–133; the sequence is IPEMKTIL. Transmembrane regions (helical) follow at residues 142-160 and 167-185; these read LSVR…SLGS and EGPF…TRLV. Residues 165 to 169 carry the Selectivity filter part_2 motif; sequence GKEGP. 2 intramembrane regions (helical) span residues 202–214 and 218–226; these read MLAA…VACT and PIGGVLFSI. Helical transmembrane passes span 238-258, 285-313, 322-341, 405-425, and 433-456; these read YWRG…LRMF, LPIF…VLFL, IFQK…ISSL, YSPF…AILA, and GIFM…VFSL. The Selectivity filter part_3 motif lies at 433-437; that stretch reads GIFMP. Chloride is bound by residues I434 and F435. The segment at residues 473–487 is an intramembrane region (helical); the sequence is GVYAVVGAAAFCGAV. Residues 488–489 constitute an intramembrane region (note=Loop between two helices); sequence TH. Residues 490–501 constitute an intramembrane region (helical); that stretch reads TVSVAVIVFELT. Positions 502–506 form an intramembrane region, note=Loop between two helices; sequence GQLCH. The chain crosses the membrane as a helical span at residues 507 to 524; that stretch reads LLPVMIAVLIANAVASYL. Residues 525-1001 are Cytoplasmic-facing; sequence QPSIYDSIIR…LPDDVHDEKF (477 aa). Y529 is a chloride binding site. In terms of domain architecture, CBS 1 spans 560 to 619; that stretch reads MISPLVYIAKDSTVGDIKRALETKTRIRAFPLVENMESLALVGSVSRSQLQRYVDSQIGT. The stretch at 625-657 forms a coiled coil; the sequence is EATRRIKQRLEDEESERKRREESKSDDTEDSLE. Basic and acidic residues predominate over residues 634 to 650; the sequence is LEDEESERKRREESKSD. The interval 634 to 662 is disordered; the sequence is LEDEESERKRREESKSDDTEDSLETTGAG. 2 positions are modified to phosphoserine; by gck-3: S742 and S747. The 58-residue stretch at 788-845 folds into the CBS 2 domain; the sequence is IDSTPFQLSEYTSLFKAHSLFSLLGLNRAYVTKKGQLIGVVALKELRLAIEYLQSGKV.

This sequence belongs to the chloride channel (TC 2.A.49) family. Isoform a interacts (via RFLI motif) with gck-3 (via C-terminus). Phosphorylated by gck-3; phosphorylation at both Ser-742 and Ser-747 is required to inhibit channel activity. Dephosphorylated by gsp-1/2 during cell swelling and oocyte meiotic maturation, which results in channel activation. As to expression, expressed in excretory cell, 4 anterior epithelial cells of the intestine, hermaphrodite-specific neurons and enteric muscles. Expressed also in vulva and uterus. Isoform a is expressed in oocytes (at protein level).

The protein localises to the cell membrane. Its function is as follows. Voltage-gated chloride channel. Insensitive to depolarizing conditioning voltages, requires low voltages for activation, insensitive to chloride levels and has a mild sensitivity to low pH. Channel gating properties are conferred by the cytoplasmic C-terminus. Plays a role in egg laying by modulating hermaphrodite-specific neurons (HSN) excitability and the ovulatory contractions of gap-junction-coupled gonadal sheath cells. When active, may prevent tubular formation of the excretory canals. Activated during oocyte meiotic maturation and by membrane hyperpolarization and cell swelling. Inhibited by Zn(2+) and to a lesser extent by Cd(2+). Functionally, voltage-gated chloride channel. Sensitive to depolarizing conditioning voltages, requires stronger voltages for activation and activation is slower, is inhibited by low concentrations of chloride and is activated by low pH. Channel gating properties are conferred by the cytoplasmic C-terminus. This Caenorhabditis elegans protein is Chloride channel protein clh-3.